A 226-amino-acid polypeptide reads, in one-letter code: Lipoprotein signal peptidase (226 aa).

A run of 3 helical transmembrane segments spans residues 12–32 (KVVA…KIWV), 69–89 (FLSL…AKLV), and 103–123 (SLII…GVIF). Catalysis depends on residues D150 and D184. Residues 173–193 (FVFFHPVFNFADSCISIGLIL) traverse the membrane as a helical segment.

The protein belongs to the peptidase A8 family.

It localises to the cell inner membrane. The enzyme catalyses Release of signal peptides from bacterial membrane prolipoproteins. Hydrolyzes -Xaa-Yaa-Zaa-|-(S,diacylglyceryl)Cys-, in which Xaa is hydrophobic (preferably Leu), and Yaa (Ala or Ser) and Zaa (Gly or Ala) have small, neutral side chains.. It functions in the pathway protein modification; lipoprotein biosynthesis (signal peptide cleavage). Its function is as follows. This protein specifically catalyzes the removal of signal peptides from prolipoproteins. The chain is Lipoprotein signal peptidase from Porphyromonas gingivalis (strain ATCC 33277 / DSM 20709 / CIP 103683 / JCM 12257 / NCTC 11834 / 2561).